The primary structure comprises 301 residues: Tyrosine recombinase XerC (301 aa).

Residues 1–89 form the Core-binding (CB) domain; it reads MGLDGLAAYL…SWRQYCVWLV (89 aa). One can recognise a Tyr recombinase domain in the interval 110-290; it reads RVPKALPQEW…DFDHIARLYD (181 aa). Catalysis depends on residues Arg151, Lys175, His242, Arg245, and His268. The active-site O-(3'-phospho-DNA)-tyrosine intermediate is Tyr277.

It belongs to the 'phage' integrase family. XerC subfamily. As to quaternary structure, forms a cyclic heterotetrameric complex composed of two molecules of XerC and two molecules of XerD.

It localises to the cytoplasm. Functionally, site-specific tyrosine recombinase, which acts by catalyzing the cutting and rejoining of the recombining DNA molecules. The XerC-XerD complex is essential to convert dimers of the bacterial chromosome into monomers to permit their segregation at cell division. It also contributes to the segregational stability of plasmids. This is Tyrosine recombinase XerC from Neisseria meningitidis serogroup B (strain ATCC BAA-335 / MC58).